The following is a 357-amino-acid chain: GDP-polyphosphate phosphotransferase (357 aa).

The tract at residues Met1–Asn83 is disordered. Residues Gln14 to Pro25 are compositionally biased toward low complexity. Over residues Ala26–Arg40 the composition is skewed to basic residues.

This sequence belongs to the polyphosphate kinase 2 (PPK2) family. Class I subfamily. In terms of assembly, homotetramer. Also forms octamers. Mg(2+) is required as a cofactor. Requires Mn(2+) as cofactor.

It carries out the reaction [phosphate](n) + GTP = [phosphate](n+1) + GDP. It catalyses the reaction [phosphate](n) + ATP = [phosphate](n+1) + ADP. In terms of biological role, uses inorganic polyphosphate (polyP) as a donor to convert GDP to GTP and ADP to ATP. Shows a preference for GDP. Can also catalyze the synthesis of polyP from GTP or ATP, but the rate of polyP utilization is 75-fold greater than the rate of polyP synthesis. In Pseudomonas aeruginosa (strain ATCC 15692 / DSM 22644 / CIP 104116 / JCM 14847 / LMG 12228 / 1C / PRS 101 / PAO1), this protein is GDP-polyphosphate phosphotransferase.